Consider the following 460-residue polypeptide: Interleukin-1 receptor-associated kinase 4 (460 aa).

Methionine 1 carries the post-translational modification N-acetylmethionine. The Death domain occupies arginine 20–alanine 104. Residue lysine 34 is modified to N6-acetyllysine. A Protein kinase domain is found at serine 186 to leucine 454. Residues methionine 192 to valine 200 and lysine 213 each bind ATP. The active-site Proton acceptor is aspartate 311. ATP is bound by residues lysine 313 to asparagine 316 and aspartate 329. Phosphothreonine occurs at positions 342 and 345. Serine 346 carries the post-translational modification Phosphoserine.

This sequence belongs to the protein kinase superfamily. TKL Ser/Thr protein kinase family. Pelle subfamily. In terms of assembly, associates with MYD88 and IRAK2 to form a ternary complex called the Myddosome. Once phosphorylated, IRAK4 dissociates from the receptor complex and then associates with the TNF receptor-associated factor 6 (TRAF6), IRAK1, and PELI1; this intermediate complex is required for subsequent NF-kappa-B activation. Direct binding of SMAD6 to PELI1 prevents complex formation and hence negatively regulates IL1R-TLR signaling and eventually NF-kappa-B-mediated gene expression. Interacts with IL1RL1. Interacts (when phosphorylated) with IRAK1. May interact (when phosphorylated) with IRAK3. It depends on Mg(2+) as a cofactor. Phosphorylated.

The protein localises to the cytoplasm. It carries out the reaction L-seryl-[protein] + ATP = O-phospho-L-seryl-[protein] + ADP + H(+). The catalysed reaction is L-threonyl-[protein] + ATP = O-phospho-L-threonyl-[protein] + ADP + H(+). Functionally, serine/threonine-protein kinase that plays a critical role in initiating innate immune response against foreign pathogens. Involved in Toll-like receptor (TLR) and IL-1R signaling pathways. Is rapidly recruited by MYD88 to the receptor-signaling complex upon TLR activation to form the Myddosome together with IRAK2. Phosphorylates initially IRAK1, thus stimulating the kinase activity and intensive autophosphorylation of IRAK1. Phosphorylates E3 ubiquitin ligases Pellino proteins (PELI1, PELI2 and PELI3) to promote pellino-mediated polyubiquitination of IRAK1. Then, the ubiquitin-binding domain of IKBKG/NEMO binds to polyubiquitinated IRAK1 bringing together the IRAK1-MAP3K7/TAK1-TRAF6 complex and the NEMO-IKKA-IKKB complex. In turn, MAP3K7/TAK1 activates IKKs (CHUK/IKKA and IKBKB/IKKB) leading to NF-kappa-B nuclear translocation and activation. Alternatively, phosphorylates TIRAP to promote its ubiquitination and subsequent degradation. Phosphorylates NCF1 and regulates NADPH oxidase activation after LPS stimulation suggesting a similar mechanism during microbial infections. The chain is Interleukin-1 receptor-associated kinase 4 (IRAK4) from Homo sapiens (Human).